Reading from the N-terminus, the 711-residue chain is Long-chain-fatty-acid--CoA ligase 4 (711 aa).

Residues 8–28 (LTIILLPVHLLITIYSALIFI) traverse the membrane as a helical; Signal-anchor for type III membrane protein segment. At 29–711 (PWYFLTNAKK…KDIERMYGGK (683 aa)) the chain is on the cytoplasmic side. Position 447 is a phosphoserine (S447).

Belongs to the ATP-dependent AMP-binding enzyme family. Requires Mg(2+) as cofactor. In terms of tissue distribution, abundant in steroidogenic tissues, also found in the kidney, brain and liver.

It is found in the mitochondrion outer membrane. Its subcellular location is the peroxisome membrane. It localises to the microsome membrane. The protein localises to the endoplasmic reticulum membrane. The protein resides in the cell membrane. It carries out the reaction a long-chain fatty acid + ATP + CoA = a long-chain fatty acyl-CoA + AMP + diphosphate. It catalyses the reaction (5Z,8Z,11Z,14Z)-eicosatetraenoate + ATP + CoA = (5Z,8Z,11Z,14Z)-eicosatetraenoyl-CoA + AMP + diphosphate. The catalysed reaction is 15-hydroxy-(5Z,8Z,11Z,13E)-eicosatetraenoate + ATP + CoA = 15-hydroxy-(5Z,8Z,11Z,13E)-eicosatetraenoyl-CoA + AMP + diphosphate. The enzyme catalyses 12-hydroxy-(5Z,8Z,10E,14Z)-eicosatetraenoate + ATP + CoA = 12-hydroxy-(5Z,8Z,10E,14Z)-eicosatetraenoyl-CoA + AMP + diphosphate. It carries out the reaction 5-hydroxy-(6E,8Z,11Z,14Z)-eicosatetraenoate + ATP + CoA = 5-hydroxy-(6E,8Z,11Z,14Z)-eicosatetraenoyl-CoA + AMP + diphosphate. It catalyses the reaction 5,6-epoxy-(8Z,11Z,14Z)-eicosatrienoate + ATP + CoA = 5,6-epoxy-(8Z,11Z,14Z)-eicosatrienoyl-CoA + AMP + diphosphate. The catalysed reaction is 14,15-epoxy-(5Z,8Z,11Z)-eicosatrienoate + ATP + CoA = 14,15-epoxy-(5Z,8Z,11Z)-eicosatrienoyl-CoA + AMP + diphosphate. The enzyme catalyses 11,12-epoxy-(5Z,8Z,14Z)-eicosatrienoate + ATP + CoA = 11,12-epoxy-(5Z,8Z,14Z)-eicosatrienoyl-CoA + AMP + diphosphate. It carries out the reaction 8,9-epoxy-(5Z,11Z,14Z)-eicosatrienoate + ATP + CoA = 8,9-epoxy-(5Z,11Z,14Z)-eicosatrienoyl-CoA + AMP + diphosphate. It catalyses the reaction hexadecanoate + ATP + CoA = hexadecanoyl-CoA + AMP + diphosphate. The catalysed reaction is (E)-hexadec-2-enoate + ATP + CoA = (2E)-hexadecenoyl-CoA + AMP + diphosphate. With respect to regulation, both triacsin C and rosiglitazone inhibit arachidonoyl-CoA ligase activity. Catalyzes the conversion of long-chain fatty acids to their active form acyl-CoA for both synthesis of cellular lipids, and degradation via beta-oxidation. Preferentially activates arachidonate and eicosapentaenoate as substrates. Preferentially activates 8,9-EET &gt; 14,15-EET &gt; 5,6-EET &gt; 11,12-EET. Modulates glucose-stimulated insulin secretion by regulating the levels of unesterified EETs. Modulates prostaglandin E2 secretion. The protein is Long-chain-fatty-acid--CoA ligase 4 (Acsl4) of Mus musculus (Mouse).